The following is a 429-amino-acid chain: Histidine--tRNA ligase (429 aa).

It belongs to the class-II aminoacyl-tRNA synthetase family. As to quaternary structure, homodimer.

Its subcellular location is the cytoplasm. It carries out the reaction tRNA(His) + L-histidine + ATP = L-histidyl-tRNA(His) + AMP + diphosphate + H(+). This chain is Histidine--tRNA ligase, found in Streptococcus pneumoniae (strain Taiwan19F-14).